A 138-amino-acid polypeptide reads, in one-letter code: Small ribosomal subunit protein bS18m (138 aa).

It belongs to the bacterial ribosomal protein bS18 family. Component of the mitochondrial small ribosomal subunit. Mature mitochondrial ribosomes consist of a small (37S) and a large (54S) subunit. The 37S subunit contains at least 33 different proteins and 1 molecule of RNA (15S). The 54S subunit contains at least 45 different proteins and 1 molecule of RNA (21S).

The protein localises to the mitochondrion. The polypeptide is Small ribosomal subunit protein bS18m (RSM18) (Saccharomyces cerevisiae (strain RM11-1a) (Baker's yeast)).